A 314-amino-acid polypeptide reads, in one-letter code: Taste receptor type 2 member 42 (314 aa).

The Extracellular segment spans residues M1–K7. Residues I8 to G28 form a helical membrane-spanning segment. Residues L29–C50 lie on the Cytoplasmic side of the membrane. Residues L51–L71 form a helical membrane-spanning segment. Topologically, residues A72–T101 are extracellular. Residues C102–L122 form a helical membrane-spanning segment. At R123–N127 the chain is on the cytoplasmic side. A helical membrane pass occupies residues G128–L148. Residues K149–L187 are Extracellular-facing. N163 carries an N-linked (GlcNAc...) asparagine glycan. A helical membrane pass occupies residues T188–V208. Over R209–S238 the chain is Cytoplasmic. Residues F239–M259 form a helical membrane-spanning segment. At S260 to Y265 the chain is on the extracellular side. The helical transmembrane segment at I266–L286 threads the bilayer. Over G287–L314 the chain is Cytoplasmic.

Belongs to the G-protein coupled receptor T2R family.

It is found in the membrane. Its function is as follows. Receptor that may play a role in the perception of bitterness and is gustducin-linked. May play a role in sensing the chemical composition of the gastrointestinal content. The activity of this receptor may stimulate alpha gustducin, mediate PLC-beta-2 activation and lead to the gating of TRPM5. The polypeptide is Taste receptor type 2 member 42 (TAS2R42) (Pongo pygmaeus (Bornean orangutan)).